We begin with the raw amino-acid sequence, 89 residues long: Small ribosomal subunit protein bS16c (89 aa).

Belongs to the bacterial ribosomal protein bS16 family.

The protein localises to the plastid. It localises to the chloroplast. This Morus indica (Mulberry) protein is Small ribosomal subunit protein bS16c.